Here is a 451-residue protein sequence, read N- to C-terminus: UDP-N-acetylmuramoylalanine--D-glutamate ligase (451 aa).

119 to 125 (GSNGKTT) is an ATP binding site.

It belongs to the MurCDEF family.

The protein localises to the cytoplasm. The enzyme catalyses UDP-N-acetyl-alpha-D-muramoyl-L-alanine + D-glutamate + ATP = UDP-N-acetyl-alpha-D-muramoyl-L-alanyl-D-glutamate + ADP + phosphate + H(+). It functions in the pathway cell wall biogenesis; peptidoglycan biosynthesis. In terms of biological role, cell wall formation. Catalyzes the addition of glutamate to the nucleotide precursor UDP-N-acetylmuramoyl-L-alanine (UMA). The protein is UDP-N-acetylmuramoylalanine--D-glutamate ligase of Bacillus cytotoxicus (strain DSM 22905 / CIP 110041 / 391-98 / NVH 391-98).